Here is a 923-residue protein sequence, read N- to C-terminus: Calmodulin-binding transcription activator 5 (923 aa).

Residues 25 to 151 constitute a DNA-binding region (CG-1); the sequence is IQTMLDEAYS…YRETHEVHAA (127 aa). The interval 272-372 is transcription activation; the sequence is VYQNNNSCGA…HSHSDIPEQV (101 aa). An ANK repeat occupies 611 to 640; sequence QGWTALHWAAYYGREKMVAALLSAGARPNL. IQ domains follow at residues 757 to 786, 799 to 828, and 875 to 904; these read NIIA…IQYR, MRKK…SVGV, and LERS…AHEE. A calmodulin-binding region spans residues 824–846; that stretch reads WSVGVLEKAILRWRLKRKGFRGL. The stretch at 887-914 forms a coiled coil; that stretch reads RSKKAQQDYRRMKLAHEEAQLEYDGMQE.

It belongs to the CAMTA family. Expressed in roots, stems, leaves, pollen, top of sepals and siliques.

The protein localises to the nucleus. In terms of biological role, transcription activator. Binds to the DNA consensus sequence 5'-[ACG]CGCG[GTC]-3'. Regulates transcriptional activity in response to calcium signals. Binds calmodulin in a calcium-dependent manner. Involved in response to cold. Contributes together with CAMTA3 to the positive regulation of the cold-induced expression of DREB1A/CBF3, DREB1B/CBF1 and DREB1C/CBF2. In Arabidopsis thaliana (Mouse-ear cress), this protein is Calmodulin-binding transcription activator 5.